The sequence spans 281 residues: uncharacterized protein (281 aa).

3 helical membrane-spanning segments follow: residues 23–45, 65–87, and 94–116; these read LLLS…FFAA, IANF…ASLG, and TSVI…GSLS.

This sequence belongs to the MscS (TC 1.A.23) family.

It localises to the cell membrane. This is an uncharacterized protein from Buchnera aphidicola subsp. Baizongia pistaciae (strain Bp).